The following is a 434-amino-acid chain: Lecithin-cholesterol acyltransferase-like 1 (434 aa).

Catalysis depends on S191, which acts as the Acyl-ester intermediate. Catalysis depends on charge relay system residues D354 and H386.

The protein belongs to the AB hydrolase superfamily. Lipase family.

The protein is Lecithin-cholesterol acyltransferase-like 1 of Oryza sativa subsp. japonica (Rice).